The following is a 241-amino-acid chain: MPGNHWYDILKKIACEGSSDIDELKGIFEKELSKRKFDSIRNIEDLIDVLERADMLSLHNVEPLRKMSSHKPKLIEALDRYGTPVSAPREPVNIYQEERLAEELRQHLRISQAFQILSAPGVAPPAFIPAAAPTPPPPQQNYITPAAFTDRKRTAVFNKISEELGRFWRIFGRKAGIGEGTMDDIEERYPRDLKSRILHLLKLIEEDDCHDPRQLLMRLCRALTECGRNDIKRKVEQIMSH.

The death-inducing stretch occupies residues 1 to 101 (MPGNHWYDIL…VNIYQEERLA (101 aa)). Positions 151–237 (RKRTAVFNKI…RNDIKRKVEQ (87 aa)) constitute a Death domain.

In terms of assembly, N-terminus interacts with Dredd. Interacts with imd.

It localises to the cytoplasm. Functionally, component of the IMD signaling pathway and is required for the host defense against Gram-negative bacteria. Interacts with Dredd, promotes cleavage of Dredd and is necessary and sufficient for enhancing Dredd-induced apoptosis. In Drosophila pseudoobscura pseudoobscura (Fruit fly), this protein is Fas-associated death domain protein (Fadd).